The following is a 292-amino-acid chain: Glycine--tRNA ligase alpha subunit (292 aa).

Belongs to the class-II aminoacyl-tRNA synthetase family. In terms of assembly, tetramer of two alpha and two beta subunits.

The protein localises to the cytoplasm. It catalyses the reaction tRNA(Gly) + glycine + ATP = glycyl-tRNA(Gly) + AMP + diphosphate. This chain is Glycine--tRNA ligase alpha subunit, found in Desulfovibrio desulfuricans (strain ATCC 27774 / DSM 6949 / MB).